Here is a 365-residue protein sequence, read N- to C-terminus: Phosphoserine aminotransferase (365 aa).

Residue Arg-40 coordinates L-glutamate. Residues 74–75, Phe-99, Thr-155, Asp-177, and Gln-200 contribute to the pyridoxal 5'-phosphate site; that span reads AS. Lys-201 bears the N6-(pyridoxal phosphate)lysine mark. 241–242 provides a ligand contact to pyridoxal 5'-phosphate; the sequence is NT.

This sequence belongs to the class-V pyridoxal-phosphate-dependent aminotransferase family. SerC subfamily. In terms of assembly, homodimer. Pyridoxal 5'-phosphate serves as cofactor.

The protein localises to the cytoplasm. The catalysed reaction is O-phospho-L-serine + 2-oxoglutarate = 3-phosphooxypyruvate + L-glutamate. The enzyme catalyses 4-(phosphooxy)-L-threonine + 2-oxoglutarate = (R)-3-hydroxy-2-oxo-4-phosphooxybutanoate + L-glutamate. It participates in amino-acid biosynthesis; L-serine biosynthesis; L-serine from 3-phospho-D-glycerate: step 2/3. Its function is as follows. Catalyzes the reversible conversion of 3-phosphohydroxypyruvate to phosphoserine and of 3-hydroxy-2-oxo-4-phosphonooxybutanoate to phosphohydroxythreonine. In Lactococcus lactis subsp. lactis (strain IL1403) (Streptococcus lactis), this protein is Phosphoserine aminotransferase.